The sequence spans 520 residues: GMP synthase [glutamine-hydrolyzing] (520 aa).

Residues 9-202 (KILILDFGSQ…VRAICGCTGH (194 aa)) form the Glutamine amidotransferase type-1 domain. The active-site Nucleophile is Cys-86. Residues His-176 and Glu-178 contribute to the active site. The GMPS ATP-PPase domain occupies 203 to 395 (WTPGQIIEDA…LGLPHQMVWR (193 aa)). Position 230–236 (230–236 (SGGVDSS)) interacts with ATP.

Homodimer.

The enzyme catalyses XMP + L-glutamine + ATP + H2O = GMP + L-glutamate + AMP + diphosphate + 2 H(+). It functions in the pathway purine metabolism; GMP biosynthesis; GMP from XMP (L-Gln route): step 1/1. Functionally, catalyzes the synthesis of GMP from XMP. This Pelobacter propionicus (strain DSM 2379 / NBRC 103807 / OttBd1) protein is GMP synthase [glutamine-hydrolyzing].